Here is a 75-residue protein sequence, read N- to C-terminus: Small ribosomal subunit protein eS28 (75 aa).

It belongs to the eukaryotic ribosomal protein eS28 family.

This chain is Small ribosomal subunit protein eS28, found in Methanococcus aeolicus (strain ATCC BAA-1280 / DSM 17508 / OCM 812 / Nankai-3).